A 454-amino-acid chain; its full sequence is Epsin-1 (454 aa).

The ENTH domain maps to 11-143 (NLVKGYSSTQ…SDDERLNEER (133 aa)). 2 disordered regions span residues 142–195 (ERNM…EDYE) and 292–350 (YLAS…GNQS). The segment covering 149–160 (GRNRKGRRRRGT) has biased composition (basic residues). T160 carries the post-translational modification Phosphothreonine. Phosphoserine is present on S163. UIM domains are found at residues 165–184 (ENDDDLQRAISASRLTAEED) and 189–208 (KQDEDYETALQLSKEEEELK). Phosphothreonine is present on T180. Residues 180-191 (TAEEDERRRKQD) are compositionally biased toward basic and acidic residues. Low complexity predominate over residues 292–302 (YLASMQQQQQA). 2 stretches are compositionally biased toward polar residues: residues 303 to 329 (MSNNPFAKSEQSSSSPKRNQLVAASSP) and 340 to 350 (PLIQNRTGNQS). S328 carries the post-translational modification Phosphoserine. Residue K357 forms a Glycyl lysine isopeptide (Lys-Gly) (interchain with G-Cter in ubiquitin) linkage. Residues T364, T366, T384, T386, and T388 each carry the phosphothreonine modification. Over residues 384–398 (TKTGTFINSQGTGYR) the composition is skewed to polar residues. Residues 384–405 (TKTGTFINSQGTGYRQVSDDPN) form a disordered region. A phosphothreonine; by PRK1 mark is found at T395 and T415. Over residues 418 to 428 (PSTSVVPTQTG) the composition is skewed to polar residues. The segment at 418–454 (PSTSVVPTQTGYGFGNQSQQQSQNNGSNNRGYTLIDL) is disordered. The segment covering 432-446 (GNQSQQQSQNNGSNN) has biased composition (low complexity). The clathrin-binding stretch occupies residues 447 to 454 (RGYTLIDL).

It belongs to the epsin family. Interacts with EDE1 and PAN1.

The protein resides in the cytoplasm. The protein localises to the membrane. In terms of biological role, binds to membranes enriched in phosphatidylinositol 3,5-bisphosphate (PtdIns(3,5)P2) and phosphatidylinositol 4,5-bisphosphate (PtdIns(4,5)P2). Required for endocytosis and localization of actin. Negatively regulated via phosphorylation. The sequence is that of Epsin-1 (ENT1) from Saccharomyces cerevisiae (strain ATCC 204508 / S288c) (Baker's yeast).